The following is a 71-amino-acid chain: Exodeoxyribonuclease 7 small subunit (71 aa).

Belongs to the XseB family. As to quaternary structure, heterooligomer composed of large and small subunits.

It localises to the cytoplasm. It catalyses the reaction Exonucleolytic cleavage in either 5'- to 3'- or 3'- to 5'-direction to yield nucleoside 5'-phosphates.. In terms of biological role, bidirectionally degrades single-stranded DNA into large acid-insoluble oligonucleotides, which are then degraded further into small acid-soluble oligonucleotides. In Clostridium botulinum (strain Kyoto / Type A2), this protein is Exodeoxyribonuclease 7 small subunit.